A 484-amino-acid chain; its full sequence is tRNA sulfurtransferase (484 aa).

The region spanning 63-167 (ANLILLLSST…NEKLFFIDKK (105 aa)) is the THUMP domain. Residues 185–186 (LI), Lys267, Gly289, and Gln298 contribute to the ATP site. The cysteines at positions 346 and 458 are disulfide-linked. The Rhodanese domain occupies 406–484 (FAENEIVLDI…GFDNVKVYRP (79 aa)). The active-site Cysteine persulfide intermediate is the Cys458.

The protein belongs to the ThiI family.

It localises to the cytoplasm. The catalysed reaction is [ThiI sulfur-carrier protein]-S-sulfanyl-L-cysteine + a uridine in tRNA + 2 reduced [2Fe-2S]-[ferredoxin] + ATP + H(+) = [ThiI sulfur-carrier protein]-L-cysteine + a 4-thiouridine in tRNA + 2 oxidized [2Fe-2S]-[ferredoxin] + AMP + diphosphate. It carries out the reaction [ThiS sulfur-carrier protein]-C-terminal Gly-Gly-AMP + S-sulfanyl-L-cysteinyl-[cysteine desulfurase] + AH2 = [ThiS sulfur-carrier protein]-C-terminal-Gly-aminoethanethioate + L-cysteinyl-[cysteine desulfurase] + A + AMP + 2 H(+). Its pathway is cofactor biosynthesis; thiamine diphosphate biosynthesis. Catalyzes the ATP-dependent transfer of a sulfur to tRNA to produce 4-thiouridine in position 8 of tRNAs, which functions as a near-UV photosensor. Also catalyzes the transfer of sulfur to the sulfur carrier protein ThiS, forming ThiS-thiocarboxylate. This is a step in the synthesis of thiazole, in the thiamine biosynthesis pathway. The sulfur is donated as persulfide by IscS. This is tRNA sulfurtransferase from Psychromonas ingrahamii (strain DSM 17664 / CCUG 51855 / 37).